A 136-amino-acid polypeptide reads, in one-letter code: Protein LITTLE ZIPPER 1 (136 aa).

Positions 97 to 122 (ENQNIIRENEKLKKKALLLHQENKTL) form a coiled coil.

As to quaternary structure, interacts with REV. As to expression, expressed in the adaxial epidermis of the cotyledons and in the vascular cylinder of wild-type torpedo stage embryos.

Its function is as follows. Competitive inhibitor of the HD-ZIPIII transcription factors in shoot apical meristem (SAM) development. Acts by forming non-functional heterodimers. Part of a negative feedback loop. Essential for proper functioning of stem cells in the SAM. This chain is Protein LITTLE ZIPPER 1, found in Arabidopsis thaliana (Mouse-ear cress).